A 229-amino-acid polypeptide reads, in one-letter code: Acidic leucine-rich nuclear phosphoprotein 32-related protein 1 (229 aa).

LRR repeat units lie at residues 19–40 (TVDT…TDQL), 42–63 (NLEM…PTLP), 64–85 (ALTY…DVLV), and 90–110 (DLKK…RCLK). The LRRCT domain occupies 124-164 (PSLGLLEDYREKMFEMIPSLKILDGCDVDGEEVEEEFAGEG). Acidic residues predominate over residues 155 to 177 (EVEEEFAGEGGEDSEEGSGDEDG). Residues 155–229 (EVEEEFAGEG…DNKKAAGDDE (75 aa)) form a disordered region. A compositionally biased stretch (basic and acidic residues) spans 219–229 (PDNKKAAGDDE).

The protein belongs to the ANP32 family.

In Caenorhabditis elegans, this protein is Acidic leucine-rich nuclear phosphoprotein 32-related protein 1.